Here is a 271-residue protein sequence, read N- to C-terminus: Phosphatidylglycerol--prolipoprotein diacylglyceryl transferase (271 aa).

7 helical membrane passes run 25–45 (WYGIMYVIALLLALLLAKFFV), 60–80 (YFIWVEIGVILGARLGYILIY), 103–123 (FVGIRGMSYHGAIIGFLIATL), 134–154 (WIFLDLVALSVPLAYVFGRIG), 181–201 (PSQLYEAFLEGIVVFIIVYLA), 209–229 (GELILVYAGAYSLARFICEFY), and 235–255 (GIGFVLWGMSMGQILSFIMFI). Position 152 (R152) interacts with a 1,2-diacyl-sn-glycero-3-phospho-(1'-sn-glycerol).

Belongs to the Lgt family.

Its subcellular location is the cell inner membrane. It carries out the reaction L-cysteinyl-[prolipoprotein] + a 1,2-diacyl-sn-glycero-3-phospho-(1'-sn-glycerol) = an S-1,2-diacyl-sn-glyceryl-L-cysteinyl-[prolipoprotein] + sn-glycerol 1-phosphate + H(+). The protein operates within protein modification; lipoprotein biosynthesis (diacylglyceryl transfer). In terms of biological role, catalyzes the transfer of the diacylglyceryl group from phosphatidylglycerol to the sulfhydryl group of the N-terminal cysteine of a prolipoprotein, the first step in the formation of mature lipoproteins. The sequence is that of Phosphatidylglycerol--prolipoprotein diacylglyceryl transferase from Campylobacter jejuni subsp. jejuni serotype O:23/36 (strain 81-176).